Reading from the N-terminus, the 590-residue chain is Acyl-CoA ligase sidI (590 aa).

The short motif at 6-14 (RLQQTLSHL) is the PTS2-type peroxisomal targeting signal element. Residues 220–228 (TSGSTGNPK), 359–364 (SSYGLT), D449, and R464 contribute to the ATP site. Position 364 (T364) interacts with substrate. CoA-binding positions include 472–474 (GGE) and 543–545 (YFF). K563 is a binding site for ATP.

It belongs to the ATP-dependent AMP-binding enzyme family.

The protein localises to the peroxisome. It participates in siderophore biosynthesis. In terms of biological role, acyl-CoA ligase; part of the siderophore biosynthetic pathway. Aspergillus fumigatus produces 4 types of siderophores, low-molecular-mass iron chelators, including excreted fusarinine C (FsC) and triacetylfusarinine C (TAFC) for iron uptake and intacellular ferricrocin (FC) for hyphal and hydroxyferricrocin (HFC) for conidial iron distribution and storage. TAFC consists of 3 N(2)-acetyl-N(5)-anhydromevalonyl-N(5)-hydroxyornithine residues cyclically linked by ester bonds; FC is a cyclic hexapeptide with the structure Gly-Ser-Gly-(N(5)-acetyl-N(5)-hydroxyornithine)x3. The biosynthesis of all four siderophores depends on the hydroxylation of ornithine, catalyzed by the monooxygenase sidA. Subsequently, the pathways for biosynthesis of extra- and intracellular siderophores split. For biosynthesis of extracellular siderophores, the transacylase sidF transfers anhydromevalonyl to N(5)-hydroxyornithine. The required anhydromevalonyl-CoA moiety is derived from mevalonate by CoA ligation and dehydration catalyzed by sidI and sidH respectively. The acetylation of N(5)-hydroxyornithine for FC biosynthesis involves the constitutively expressed sidL. FC is hydroxylated to HFC by an as yet uncharacterized enzyme during conidiation. Assembly of fusarinine C (FsC) and FC is catalyzed by two different nonribosomal peptide synthetases (NRPS), sidD and sidC respectively. Subsequently, sidG catalyzes N2-acetylation of FsC for forming TAFC. Both extra- and intracellular siderophores are crucial for growth during iron limitation and virulence. The polypeptide is Acyl-CoA ligase sidI (Aspergillus fumigatus (strain ATCC MYA-4609 / CBS 101355 / FGSC A1100 / Af293) (Neosartorya fumigata)).